The sequence spans 404 residues: MKILTINTGSSSLKFTLYKHKNTQILVSGTIEKIKTKKSIIKIKTKNGLLEKTDKHIKSHKEALKQLIRILTNKKLKIIENPDEIQGIGHRIVHGGPSFKNSTILNTNTLSELKKISKLAPLHNPIAIKVIEITLKIFPNAKQVLCFDTSWHKTMNENAFLYATPYSWYKDYNIRKYGFHGLSYSYITKRVATILNKPKEDLNLIILHLGNGSSINAVKKGLSYDTSMGLTPLEGLVMGTRSGDIDPAIIPLMSKLLNKTPKKIEEILNKQSGMLGISLKSNDLRDIWEGVKNNEYNSKLAVEIMAYRIKKYIGSYLAVLDFNIDAIIFTAGIGVTDYGIRELSLKGFEKIGIEIDPQKNNLARDKHTESDISSEKSKTKILVIPTNEELTILEDTYNLITKPS.

N7 lines the Mg(2+) pocket. An ATP-binding site is contributed by K14. A substrate-binding site is contributed by R91. D148 (proton donor/acceptor) is an active-site residue. Residues 208 to 212 (HLGNG) and 283 to 285 (DLR) contribute to the ATP site. E388 serves as a coordination point for Mg(2+).

This sequence belongs to the acetokinase family. In terms of assembly, homodimer. Mg(2+) is required as a cofactor. Mn(2+) serves as cofactor.

Its subcellular location is the cytoplasm. The enzyme catalyses acetate + ATP = acetyl phosphate + ADP. Its pathway is metabolic intermediate biosynthesis; acetyl-CoA biosynthesis; acetyl-CoA from acetate: step 1/2. Catalyzes the formation of acetyl phosphate from acetate and ATP. Can also catalyze the reverse reaction. In Borrelia turicatae (strain 91E135), this protein is Acetate kinase.